The following is a 177-amino-acid chain: Zinc metalloproteinase-disintegrin-like scutiarin (177 aa).

The Disintegrin domain maps to 1–63; it reads NPCCDAATCK…ECPADVFHKN (63 aa). 10 cysteine pairs are disulfide-bonded: Cys-3–Cys-26, Cys-17–Cys-23, Cys-22–Cys-48, Cys-35–Cys-55, Cys-42–Cys-74, Cys-67–Cys-79, Cys-86–Cys-136, Cys-101–Cys-147, Cys-114–Cys-124, and Cys-131–Cys-173. Residues 41-43 carry the D/ECD-tripeptide motif; the sequence is ECD. Positions 43, 44, 46, 58, and 59 each coordinate Ca(2+).

This sequence belongs to the venom metalloproteinase (M12B) family. P-III subfamily. P-IIIa sub-subfamily. Monomer. Zn(2+) serves as cofactor. Glycosylated. In terms of tissue distribution, expressed by the venom gland.

It localises to the secreted. Its function is as follows. Snake venom metalloproteinase that impairs hemostasis in the envenomed animal. The polypeptide is Zinc metalloproteinase-disintegrin-like scutiarin (Crotalus scutulatus scutulatus (Mojave rattlesnake)).